Consider the following 591-residue polypeptide: DNA ligase (591 aa).

Residues Asp38–Asp42, Ser87–Leu88, and Glu119 each bind NAD(+). The N6-AMP-lysine intermediate role is filled by Lys121. NAD(+) is bound by residues Arg142, Glu181, Lys298, and Lys322. 4 residues coordinate Zn(2+): Cys415, Cys418, Cys433, and Cys439.

The protein belongs to the NAD-dependent DNA ligase family. LigA subfamily. Mg(2+) is required as a cofactor. It depends on Mn(2+) as a cofactor.

It carries out the reaction NAD(+) + (deoxyribonucleotide)n-3'-hydroxyl + 5'-phospho-(deoxyribonucleotide)m = (deoxyribonucleotide)n+m + AMP + beta-nicotinamide D-nucleotide.. Its function is as follows. DNA ligase that catalyzes the formation of phosphodiester linkages between 5'-phosphoryl and 3'-hydroxyl groups in double-stranded DNA using NAD as a coenzyme and as the energy source for the reaction. It is essential for DNA replication and repair of damaged DNA. This is DNA ligase from Wigglesworthia glossinidia brevipalpis.